Here is a 91-residue protein sequence, read N- to C-terminus: ATP synthase subunit c (91 aa).

The next 2 helical transmembrane spans lie at 4 to 24 (FTMC…GTGI) and 53 to 73 (IGLA…LIIL).

Belongs to the ATPase C chain family. As to quaternary structure, F-type ATPases have 2 components, F(1) - the catalytic core - and F(0) - the membrane proton channel. F(1) has five subunits: alpha(3), beta(3), gamma(1), delta(1), epsilon(1). F(0) has three main subunits: a(1), b(2) and c(10-14). The alpha and beta chains form an alternating ring which encloses part of the gamma chain. F(1) is attached to F(0) by a central stalk formed by the gamma and epsilon chains, while a peripheral stalk is formed by the delta and b chains.

The protein localises to the cell inner membrane. F(1)F(0) ATP synthase produces ATP from ADP in the presence of a proton or sodium gradient. F-type ATPases consist of two structural domains, F(1) containing the extramembraneous catalytic core and F(0) containing the membrane proton channel, linked together by a central stalk and a peripheral stalk. During catalysis, ATP synthesis in the catalytic domain of F(1) is coupled via a rotary mechanism of the central stalk subunits to proton translocation. Its function is as follows. Key component of the F(0) channel; it plays a direct role in translocation across the membrane. A homomeric c-ring of between 10-14 subunits forms the central stalk rotor element with the F(1) delta and epsilon subunits. This is ATP synthase subunit c from Geotalea uraniireducens (strain Rf4) (Geobacter uraniireducens).